The following is an 862-amino-acid chain: Ubiquitin carboxyl-terminal hydrolase 13 (862 aa).

Residues 182-290 form a UBP-type; degenerate zinc finger; the sequence is QASKHAKSLV…KHLAHFGIDM (109 aa). The Zn(2+) site is built by Cys-206, Cys-209, Cys-226, and His-239. The USP domain maps to 331 to 860; the sequence is TGMKNLGNSC…LGYIYFYHRI (530 aa). The active-site Nucleophile is Cys-340. 2 consecutive UBA domains span residues 647 to 688 and 722 to 762; these read DIDE…IIAH and QPPE…IFSH. His-822 functions as the Proton acceptor in the catalytic mechanism.

The protein belongs to the peptidase C19 family.

The enzyme catalyses Thiol-dependent hydrolysis of ester, thioester, amide, peptide and isopeptide bonds formed by the C-terminal Gly of ubiquitin (a 76-residue protein attached to proteins as an intracellular targeting signal).. Specifically inhibited by spautin-1 (specific and potent autophagy inhibitor-1), a derivative of MBCQ that binds to USP13 and inhibits deubiquitinase activity. In terms of biological role, deubiquitinase that mediates deubiquitination of target proteins and is involved in various processes such as autophagy and endoplasmic reticulum-associated degradation (ERAD). This chain is Ubiquitin carboxyl-terminal hydrolase 13 (USP13), found in Gallus gallus (Chicken).